We begin with the raw amino-acid sequence, 147 residues long: MATLLVLHGPNLNLLGTREPGTYGSTTLGQINQDLERRAREAGHHLLHLQSNAEYELIDRIHAARDEGVDFIIINPAAFTHTSVALRDALLAVSIPFIEVHLSNVHKREPFRHHSYFSDVAVGVICGLGATGYRLALESALEQLQRP.

Tyr-23 functions as the Proton acceptor in the catalytic mechanism. Residues Asn-75, His-81, and Asp-88 each contribute to the substrate site. His-101 acts as the Proton donor in catalysis. Residues 102–103 (LS) and Arg-112 each bind substrate.

Belongs to the type-II 3-dehydroquinase family. In terms of assembly, homododecamer.

It carries out the reaction 3-dehydroquinate = 3-dehydroshikimate + H2O. It participates in metabolic intermediate biosynthesis; chorismate biosynthesis; chorismate from D-erythrose 4-phosphate and phosphoenolpyruvate: step 3/7. Functionally, catalyzes a trans-dehydration via an enolate intermediate. This chain is 3-dehydroquinate dehydratase 1 (aroQ1), found in Pseudomonas aeruginosa (strain ATCC 15692 / DSM 22644 / CIP 104116 / JCM 14847 / LMG 12228 / 1C / PRS 101 / PAO1).